Here is a 138-residue protein sequence, read N- to C-terminus: Transcription antitermination protein NusB (138 aa).

The protein belongs to the NusB family.

Its function is as follows. Involved in transcription antitermination. Required for transcription of ribosomal RNA (rRNA) genes. Binds specifically to the boxA antiterminator sequence of the ribosomal RNA (rrn) operons. The chain is Transcription antitermination protein NusB from Yersinia pseudotuberculosis serotype O:1b (strain IP 31758).